Here is a 351-residue protein sequence, read N- to C-terminus: Increased glyphosate resistance protein (351 aa).

Residues 1–18 show a composition bias toward basic and acidic residues; it reads MHREDDSTSTGRREERLS. The disordered stretch occupies residues 1-29; sequence MHREDDSTSTGRREERLSTGKGDSLQPGP.

Its function is as follows. Confers an increase in glyphosate resistance when expressed in E.coli. The chain is Increased glyphosate resistance protein from Pseudomonas sp. (strain PG2982).